The sequence spans 345 residues: Phosphoribosylformylglycinamidine cyclo-ligase (345 aa).

The protein belongs to the AIR synthase family.

Its subcellular location is the cytoplasm. It catalyses the reaction 2-formamido-N(1)-(5-O-phospho-beta-D-ribosyl)acetamidine + ATP = 5-amino-1-(5-phospho-beta-D-ribosyl)imidazole + ADP + phosphate + H(+). The protein operates within purine metabolism; IMP biosynthesis via de novo pathway; 5-amino-1-(5-phospho-D-ribosyl)imidazole from N(2)-formyl-N(1)-(5-phospho-D-ribosyl)glycinamide: step 2/2. This chain is Phosphoribosylformylglycinamidine cyclo-ligase, found in Shewanella oneidensis (strain ATCC 700550 / JCM 31522 / CIP 106686 / LMG 19005 / NCIMB 14063 / MR-1).